Here is a 140-residue protein sequence, read N- to C-terminus: ATP synthase epsilon chain (140 aa).

It belongs to the ATPase epsilon chain family. As to quaternary structure, F-type ATPases have 2 components, CF(1) - the catalytic core - and CF(0) - the membrane proton channel. CF(1) has five subunits: alpha(3), beta(3), gamma(1), delta(1), epsilon(1). CF(0) has three main subunits: a, b and c.

The protein localises to the cell inner membrane. Functionally, produces ATP from ADP in the presence of a proton gradient across the membrane. The sequence is that of ATP synthase epsilon chain (atpC) from Vibrio alginolyticus.